A 679-amino-acid chain; its full sequence is HEAT repeat-containing protein 3 (679 aa).

Positions 1 to 11 (MGKSRTKRFKR) are enriched in basic residues. Residues 1–40 (MGKSRTKRFKRPQFSPIESCQAEAAAASNGTGDEEDDGPA) form a disordered region. Ser15 carries the phosphoserine modification. 2 HEAT repeats span residues 38 to 69 (GPAA…VQQR) and 74 to 110 (DLAR…SACG). Ser144 is modified (phosphoserine). Thr339 bears the Phosphothreonine mark.

Belongs to the nuclear import and ribosome assembly adapter family. In terms of assembly, component of a hexameric 5S RNP precursor complex, composed of 5S RNA, RRS1, RPF2/BXDC1, RPL5, RPL11 and HEATR3; this complex acts as a precursor for ribosome assembly.

Its function is as follows. Plays a role in ribosome biogenesis and in nuclear import of the 60S ribosomal protein L5/large ribosomal subunit protein uL18 (RPL5). Required for proper erythrocyte maturation. The polypeptide is HEAT repeat-containing protein 3 (Heatr3) (Mus musculus (Mouse)).